Here is a 295-residue protein sequence, read N- to C-terminus: MSKISPINIKELLDAGVHFGHKTSRWNPKMASYIYGERDDVHIIDLRQSAALMSVALNAIYETVKKDGKILFVSTKIQASDIIAEYAEKCGQYYVNNRWLGGMLTNWKTIACSIEKLEKLEKTLESEETRVCYTKKEILDMSRKKDKLLLSLAGIRNLNSKPDLLVVIDTNKEHIAINEAVKLNIPIVAVVDTNSNPDNINYPIPGNDDSIRSIRLYCSLFADAALQGLEESMKVSGVDIGTMQEHTDKALTSKTISKLKQTKKFSKTQNIDEETNTEFDQALSDACENKNSDNT.

This sequence belongs to the universal ribosomal protein uS2 family.

The chain is Small ribosomal subunit protein uS2 from Rickettsia typhi (strain ATCC VR-144 / Wilmington).